A 527-amino-acid polypeptide reads, in one-letter code: 4-alpha-glucanotransferase (527 aa).

Belongs to the disproportionating enzyme family.

It localises to the cytoplasm. The catalysed reaction is Transfers a segment of a (1-&gt;4)-alpha-D-glucan to a new position in an acceptor, which may be glucose or a (1-&gt;4)-alpha-D-glucan.. This chain is 4-alpha-glucanotransferase (malQ), found in Chlamydia trachomatis serovar D (strain ATCC VR-885 / DSM 19411 / UW-3/Cx).